A 273-amino-acid polypeptide reads, in one-letter code: Dermonecrotic toxin LdSicTox-alphaIB1bii (273 aa).

His-5 is a catalytic residue. Positions 25 and 27 each coordinate Mg(2+). Catalysis depends on His-41, which acts as the Nucleophile. 2 disulfide bridges follow: Cys-45-Cys-51 and Cys-47-Cys-190. Asp-85 is a binding site for Mg(2+). Asn-250 is a glycosylation site (N-linked (GlcNAc...) asparagine).

This sequence belongs to the arthropod phospholipase D family. Class II subfamily. Mg(2+) serves as cofactor. In terms of tissue distribution, expressed by the venom gland.

The protein localises to the secreted. It catalyses the reaction an N-(acyl)-sphingosylphosphocholine = an N-(acyl)-sphingosyl-1,3-cyclic phosphate + choline. The enzyme catalyses an N-(acyl)-sphingosylphosphoethanolamine = an N-(acyl)-sphingosyl-1,3-cyclic phosphate + ethanolamine. It carries out the reaction a 1-acyl-sn-glycero-3-phosphocholine = a 1-acyl-sn-glycero-2,3-cyclic phosphate + choline. The catalysed reaction is a 1-acyl-sn-glycero-3-phosphoethanolamine = a 1-acyl-sn-glycero-2,3-cyclic phosphate + ethanolamine. In terms of biological role, dermonecrotic toxins cleave the phosphodiester linkage between the phosphate and headgroup of certain phospholipids (sphingolipid and lysolipid substrates), forming an alcohol (often choline) and a cyclic phosphate. This toxin acts on sphingomyelin (SM). It may also act on ceramide phosphoethanolamine (CPE), lysophosphatidylcholine (LPC) and lysophosphatidylethanolamine (LPE), but not on lysophosphatidylserine (LPS), and lysophosphatidylglycerol (LPG). It acts by transphosphatidylation, releasing exclusively cyclic phosphate products as second products. Induces dermonecrosis, hemolysis, increased vascular permeability, edema, inflammatory response, and platelet aggregation. In Loxosceles deserta (Desert recluse spider), this protein is Dermonecrotic toxin LdSicTox-alphaIB1bii.